We begin with the raw amino-acid sequence, 333 residues long: 4-hydroxythreonine-4-phosphate dehydrogenase (333 aa).

Substrate-binding residues include histidine 133 and threonine 134. The a divalent metal cation site is built by histidine 169, histidine 214, and histidine 269. 3 residues coordinate substrate: lysine 277, asparagine 286, and arginine 295.

It belongs to the PdxA family. Homodimer. The cofactor is Zn(2+). Mg(2+) serves as cofactor. Co(2+) is required as a cofactor.

Its subcellular location is the cytoplasm. It carries out the reaction 4-(phosphooxy)-L-threonine + NAD(+) = 3-amino-2-oxopropyl phosphate + CO2 + NADH. Its pathway is cofactor biosynthesis; pyridoxine 5'-phosphate biosynthesis; pyridoxine 5'-phosphate from D-erythrose 4-phosphate: step 4/5. Its function is as follows. Catalyzes the NAD(P)-dependent oxidation of 4-(phosphooxy)-L-threonine (HTP) into 2-amino-3-oxo-4-(phosphooxy)butyric acid which spontaneously decarboxylates to form 3-amino-2-oxopropyl phosphate (AHAP). This chain is 4-hydroxythreonine-4-phosphate dehydrogenase, found in Caulobacter vibrioides (strain ATCC 19089 / CIP 103742 / CB 15) (Caulobacter crescentus).